The primary structure comprises 523 residues: Translation initiation factor eIF2B subunit delta (523 aa).

Residues 1-154 (MAAVAVAVRE…EHTQADDPTL (154 aa)) are disordered. A2 is subject to N-acetylalanine. S12 bears the Phosphoserine mark. Residues 31–40 (MTQEEKLQLR) show a composition bias toward basic and acidic residues. A compositionally biased stretch (basic residues) spans 41–51 (KEKKQQKKKRK). Position 85 is a phosphothreonine (T85). Residues 95–120 (TKAELRAERRAKQEAERALKQARKGE) are compositionally biased toward basic and acidic residues. S129 carries the phosphoserine modification. The interval 170–179 (RKDYGSKVSL) is may bind the chemical integrated stress response (ISR) inhibitor ISRIB.

The protein belongs to the eIF-2B alpha/beta/delta subunits family. Component of the translation initiation factor 2B (eIF2B) complex which is a heterodecamer of two sets of five different subunits: alpha, beta, gamma, delta and epsilon. Subunits alpha, beta and delta comprise a regulatory subcomplex and subunits epsilon and gamma comprise a catalytic subcomplex. Within the complex, the hexameric regulatory complex resides at the center, with the two heterodimeric catalytic subcomplexes bound on opposite sides.

The protein resides in the cytoplasm. It localises to the cytosol. Activated by the chemical integrated stress response (ISR) inhibitor ISRIB which stimulates guanine nucleotide exchange factor activity for both phosphorylated and unphosphorylated eIF2. Acts as a component of the translation initiation factor 2B (eIF2B) complex, which catalyzes the exchange of GDP for GTP on eukaryotic initiation factor 2 (eIF2) gamma subunit. Its guanine nucleotide exchange factor activity is repressed when bound to eIF2 complex phosphorylated on the alpha subunit, thereby limiting the amount of methionyl-initiator methionine tRNA available to the ribosome and consequently global translation is repressed. This chain is Translation initiation factor eIF2B subunit delta (EIF2B4), found in Oryctolagus cuniculus (Rabbit).